A 146-amino-acid polypeptide reads, in one-letter code: Large ribosomal subunit protein uL13 (146 aa).

It belongs to the universal ribosomal protein uL13 family. Part of the 50S ribosomal subunit.

This protein is one of the early assembly proteins of the 50S ribosomal subunit, although it is not seen to bind rRNA by itself. It is important during the early stages of 50S assembly. The chain is Large ribosomal subunit protein uL13 from Mycoplasma pneumoniae (strain ATCC 29342 / M129 / Subtype 1) (Mycoplasmoides pneumoniae).